A 316-amino-acid polypeptide reads, in one-letter code: Probable cell division protein WhiA (316 aa).

Positions Thr-275–Ala-309 form a DNA-binding region, H-T-H motif.

The protein belongs to the WhiA family.

Functionally, involved in cell division and chromosome segregation. The sequence is that of Probable cell division protein WhiA from Bacillus cereus (strain G9842).